The chain runs to 180 residues: Large ribosomal subunit protein uL6 (180 aa).

The protein belongs to the universal ribosomal protein uL6 family. In terms of assembly, part of the 50S ribosomal subunit.

This protein binds to the 23S rRNA, and is important in its secondary structure. It is located near the subunit interface in the base of the L7/L12 stalk, and near the tRNA binding site of the peptidyltransferase center. This chain is Large ribosomal subunit protein uL6, found in Cutibacterium acnes (strain DSM 16379 / KPA171202) (Propionibacterium acnes).